A 391-amino-acid polypeptide reads, in one-letter code: ATP-sensitive inward rectifier potassium channel 1 (391 aa).

Residues 1-77 lie on the Cytoplasmic side of the membrane; that stretch reads MNASSRNVFD…IWTTVLDLKW (77 aa). Serine 44 is subject to Phosphoserine; by SGK1. A helical transmembrane segment spans residues 78-102; sequence RYKMTIFITAFLGSWFFFGLLWYAV. The Extracellular segment spans residues 103–127; the sequence is AYIHKDLPEFHPSANHTPCVENING. A glycan (N-linked (GlcNAc...) asparagine) is linked at asparagine 117. Residues 128–139 constitute an intramembrane region (helical; Pore-forming); it reads LTSAFLFSLETQ. The pore-forming intramembrane region spans 140-146; that stretch reads VTIGYGF. The Selectivity filter signature appears at 141-146; it reads TIGYGF. At 147 to 155 the chain is on the extracellular side; it reads RCVTEQCAT. The chain crosses the membrane as a helical span at residues 156-177; the sequence is AIFLLIFQSILGVIINSFMCGA. Over 178 to 391 the chain is Cytoplasmic; sequence ILAKISRPKK…EVNETDDTKM (214 aa). Residues 180 to 207 are polyphosphoinositide (PIP2)-binding; sequence AKISRPKKRAKTITFSKNAVISKRGGKL. Position 223–230 (223–230) interacts with ATP; that stretch reads GSHIYGKL.

Belongs to the inward rectifier-type potassium channel (TC 1.A.2.1) family. KCNJ1 subfamily. As to quaternary structure, interacts with SGK1 and SLC9A3R2/NHERF2. In terms of processing, phosphorylation at Ser-44 by SGK1 is necessary for its expression at the cell membrane. As to expression, in the kidney and pancreatic islets. Lower levels in skeletal muscle, pancreas, spleen, brain, heart and liver.

The protein resides in the cell membrane. The catalysed reaction is K(+)(in) = K(+)(out). Inhibited by WNK3. Activated by phosphatidylinositol 4,5 biphosphate (PtdIns(4,5)P2). Inward rectifier potassium channels are characterized by a greater tendency to allow potassium to flow into the cell rather than out of it. Their voltage dependence is regulated by the concentration of extracellular potassium; as external potassium is raised, the voltage range of the channel opening shifts to more positive voltages. The inward rectification is mainly due to the blockage of outward current by internal magnesium. This channel is activated by internal ATP and can be blocked by external barium. In the kidney, probably plays a major role in potassium homeostasis. This Homo sapiens (Human) protein is ATP-sensitive inward rectifier potassium channel 1 (KCNJ1).